Reading from the N-terminus, the 255-residue chain is 5'-nucleotidase SurE (255 aa).

The a divalent metal cation site is built by D8, D9, S40, and N93.

This sequence belongs to the SurE nucleotidase family. Requires a divalent metal cation as cofactor.

The protein resides in the cytoplasm. It catalyses the reaction a ribonucleoside 5'-phosphate + H2O = a ribonucleoside + phosphate. Its function is as follows. Nucleotidase that shows phosphatase activity on nucleoside 5'-monophosphates. In Bradyrhizobium sp. (strain BTAi1 / ATCC BAA-1182), this protein is 5'-nucleotidase SurE.